The primary structure comprises 549 residues: Oxygen-dependent choline dehydrogenase (549 aa).

4–33 is an FAD binding site; it reads DFVIIGSGSAGSAMAYRLSEDGRYSVIVIE. The Proton acceptor role is filled by His465.

Belongs to the GMC oxidoreductase family. It depends on FAD as a cofactor.

It carries out the reaction choline + A = betaine aldehyde + AH2. The catalysed reaction is betaine aldehyde + NAD(+) + H2O = glycine betaine + NADH + 2 H(+). The protein operates within amine and polyamine biosynthesis; betaine biosynthesis via choline pathway; betaine aldehyde from choline (cytochrome c reductase route): step 1/1. Involved in the biosynthesis of the osmoprotectant glycine betaine. Catalyzes the oxidation of choline to betaine aldehyde and betaine aldehyde to glycine betaine at the same rate. The polypeptide is Oxygen-dependent choline dehydrogenase (Brucella ovis (strain ATCC 25840 / 63/290 / NCTC 10512)).